Consider the following 189-residue polypeptide: Mediator of RNA polymerase II transcription subunit 28 (189 aa).

Residues 75–115 (YMLIKDENQDLSIEIQRKEALLQKHYNRLEEWKACLSDIQQ) adopt a coiled-coil conformation. The interval 124–147 (PIGSGMLQGPGGGMPPMGGTPPRP) is disordered. A compositionally biased stretch (gly residues) spans 129–139 (MLQGPGGGMPP).

This sequence belongs to the Mediator complex subunit 28 family. Component of the Mediator complex, which includes at least CDK8, MED4, MED6, MED11, MED14, MED17, MED18, MED20, MED21, MED22, MED27, MED28, MED30 and MED31.

The protein localises to the nucleus. Component of the Mediator complex, a coactivator involved in the regulated transcription of nearly all RNA polymerase II-dependent genes. Mediator functions as a bridge to convey information from gene-specific regulatory proteins to the basal RNA polymerase II transcription machinery. Mediator is recruited to promoters by direct interactions with regulatory proteins and serves as a scaffold for the assembly of a functional preinitiation complex with RNA polymerase II and the general transcription factors. The protein is Mediator of RNA polymerase II transcription subunit 28 (MED28) of Drosophila melanogaster (Fruit fly).